Here is a 327-residue protein sequence, read N- to C-terminus: Urease accessory protein UreD (327 aa).

Belongs to the UreD family. UreD, UreF and UreG form a complex that acts as a GTP-hydrolysis-dependent molecular chaperone, activating the urease apoprotein by helping to assemble the nickel containing metallocenter of UreC. The UreE protein probably delivers the nickel.

Its subcellular location is the cytoplasm. Required for maturation of urease via the functional incorporation of the urease nickel metallocenter. This Yersinia enterocolitica serotype O:8 / biotype 1B (strain NCTC 13174 / 8081) protein is Urease accessory protein UreD.